We begin with the raw amino-acid sequence, 358 residues long: MFVDIHTSSKQYKAEVGSGILREAGKTIEALAPASSYLIVSDENVANRYLDVLVSSFSKEPHTFVVKAGEQSKSFHVYEQLAAFCLEKQLDRQSVIIAFGGGVVGDLAGFVAGTYMRGVRFIQVPTTLLAHDSSVGGKVAVNLPAAKNMIGVFHQPEAVLFDTELLATLPEHEWRSGFAEIVKLGFIADASFLAWLRETVPALTSIKADNLQKMVAKAIAIKADIVGKDEKEHGIRAHLNFGHTLAHAIEAELGYGKITHGEAVAIGMRFAFRLSLRFTKEDLRLADYEEWFSALGYDLRLPAGLSAQRLLARMKSDKKTNAGKIVMVLLAQLGAAYTKTVDEHLLLELLEEELGGRS.

NAD(+) contacts are provided by residues 102-106 (GVVGD), 126-127 (TT), Lys138, and Lys147. Zn(2+) is bound by residues Glu180, His243, and His260.

Belongs to the sugar phosphate cyclases superfamily. Dehydroquinate synthase family. The cofactor is Co(2+). It depends on Zn(2+) as a cofactor. NAD(+) serves as cofactor.

Its subcellular location is the cytoplasm. It carries out the reaction 7-phospho-2-dehydro-3-deoxy-D-arabino-heptonate = 3-dehydroquinate + phosphate. Its pathway is metabolic intermediate biosynthesis; chorismate biosynthesis; chorismate from D-erythrose 4-phosphate and phosphoenolpyruvate: step 2/7. In terms of biological role, catalyzes the conversion of 3-deoxy-D-arabino-heptulosonate 7-phosphate (DAHP) to dehydroquinate (DHQ). The protein is 3-dehydroquinate synthase of Shouchella clausii (strain KSM-K16) (Alkalihalobacillus clausii).